Reading from the N-terminus, the 440-residue chain is Glutamyl-tRNA reductase (440 aa).

Substrate-binding positions include 40–43 (TCNR), Ser-100, 105–107 (ERE), and Gln-111. Catalysis depends on Cys-41, which acts as the Nucleophile. 181 to 186 (GTGAYA) contacts NADP(+).

It belongs to the glutamyl-tRNA reductase family. In terms of assembly, homodimer.

It catalyses the reaction (S)-4-amino-5-oxopentanoate + tRNA(Glu) + NADP(+) = L-glutamyl-tRNA(Glu) + NADPH + H(+). The protein operates within porphyrin-containing compound metabolism; protoporphyrin-IX biosynthesis; 5-aminolevulinate from L-glutamyl-tRNA(Glu): step 1/2. Functionally, catalyzes the NADPH-dependent reduction of glutamyl-tRNA(Glu) to glutamate 1-semialdehyde (GSA). The sequence is that of Glutamyl-tRNA reductase from Renibacterium salmoninarum (strain ATCC 33209 / DSM 20767 / JCM 11484 / NBRC 15589 / NCIMB 2235).